A 173-amino-acid polypeptide reads, in one-letter code: Alpha-crystallin A chain (173 aa).

Methionine 1 is modified (N-acetylmethionine). The tract at residues methionine 1–glutamate 63 is required for complex formation with BFSP1 and BFSP2. Glutamine 6 carries the post-translational modification Deamidated glutamine; partial. Phosphoserine is present on serine 45. Position 50 is a deamidated glutamine; partial (glutamine 50). A sHSP domain is found at leucine 52–serine 162. An N6-acetyllysine modification is found at lysine 99. Position 100 (histidine 100) interacts with Zn(2+). Asparagine 101 is subject to Deamidated asparagine; partial. Zn(2+) is bound by residues glutamate 102 and histidine 107. Serine 122 is modified (phosphoserine). Asparagine 123 bears the Deamidated asparagine; partial mark. An intrachain disulfide couples cysteine 131 to cysteine 142. Residues valine 146 to serine 173 are disordered. Glutamine 147 carries the deamidated glutamine; partial modification. The segment covering aspartate 151–proline 167 has biased composition (basic and acidic residues). Position 154 (histidine 154) interacts with Zn(2+). An O-linked (GlcNAc) serine glycan is attached at serine 162.

It belongs to the small heat shock protein (HSP20) family. Heteromer composed of three CRYAA and one CRYAB subunits. Inter-subunit bridging via zinc ions enhances stability, which is crucial as there is no protein turn over in the lens. Can also form homodimers and homotetramers (dimers of dimers) which serve as the building blocks of homooligomers. Within homooligomers, the zinc-binding motif is created from residues of 3 different molecules. His-100 and Glu-102 from one molecule are ligands of the zinc ion, and His-107 and His-154 residues from additional molecules complete the site with tetrahedral coordination geometry. Part of a complex required for lens intermediate filament formation composed of BFSP1, BFSP2 and CRYAA. In terms of processing, undergoes age-dependent proteolytical cleavage at the C-terminus.

The protein localises to the cytoplasm. Its subcellular location is the nucleus. Its function is as follows. Contributes to the transparency and refractive index of the lens. In its oxidized form (absence of intramolecular disulfide bond), acts as a chaperone, preventing aggregation of various proteins under a wide range of stress conditions. Required for the correct formation of lens intermediate filaments as part of a complex composed of BFSP1, BFSP2 and CRYAA. The polypeptide is Alpha-crystallin A chain (CRYAA) (Orycteropus afer (Aardvark)).